Consider the following 544-residue polypeptide: Putative pentatricopeptide repeat-containing protein At5g59200, chloroplastic (544 aa).

Residues 1–21 are disordered; that stretch reads MISSLAAITGGPSTFRRDPDS. The N-terminal 25 residues, 1–25, are a transit peptide targeting the chloroplast; it reads MISSLAAITGGPSTFRRDPDSNTLR. 11 PPR repeats span residues 60–90, 91–125, 127–156, 157–187, 188–218, 219–253, 254–288, 289–319, 320–354, 355–385, and 391–421; these read DAFV…VSNP, NVYL…SVLP, NYVI…GFGS, SRSV…MPDR, DHVA…VKIK, DTVC…NVSA, NEFT…RMEL, SNFV…MRDK, DVIS…GFRP, NQVT…MKRV, and QIEH…IPIE. Positions 426–501 are type E motif; sequence MLGTLLSACK…EPGCSTIEVD (76 aa). The interval 502–532 is type E(+) motif; sequence NQIHEFLVGDIAHPHKEAIYQRLQELNRILR.

It belongs to the PPR family. PCMP-E subfamily.

The protein resides in the plastid. The protein localises to the chloroplast. In terms of biological role, involved in RNA editing event in chloroplasts. Required for the editing of a single site in rpl23 transcript. The protein is Putative pentatricopeptide repeat-containing protein At5g59200, chloroplastic (PCMP-E41) of Arabidopsis thaliana (Mouse-ear cress).